Reading from the N-terminus, the 373-residue chain is Glutamate 5-kinase (373 aa).

Lys15 contributes to the ATP binding site. Substrate-binding residues include Ser55, Asp142, and Asn154. ATP-binding positions include 174–175 (TD) and 216–222 (TGGMVTK). Residues 281-359 (SGKIIVDDGA…GEIEAILGYK (79 aa)) form the PUA domain.

Belongs to the glutamate 5-kinase family.

It localises to the cytoplasm. The catalysed reaction is L-glutamate + ATP = L-glutamyl 5-phosphate + ADP. The protein operates within amino-acid biosynthesis; L-proline biosynthesis; L-glutamate 5-semialdehyde from L-glutamate: step 1/2. In terms of biological role, catalyzes the transfer of a phosphate group to glutamate to form L-glutamate 5-phosphate. The chain is Glutamate 5-kinase from Geobacter sulfurreducens (strain ATCC 51573 / DSM 12127 / PCA).